A 206-amino-acid polypeptide reads, in one-letter code: Protein FAM228A (206 aa).

The protein belongs to the FAM228 family.

The protein is Protein FAM228A (FAM228A) of Homo sapiens (Human).